The primary structure comprises 242 residues: Probable L-ribulose-5-phosphate 4-epimerase UlaF (242 aa).

Substrate-binding positions include 31–32, 48–49, and 78–79; these read GN, SG, and SS. Zn(2+)-binding residues include Asp-80, His-99, and His-101. Asp-124 serves as the catalytic Proton donor/acceptor. His-175 is a Zn(2+) binding site. Tyr-234 acts as the Proton donor/acceptor in catalysis.

It belongs to the aldolase class II family. AraD/FucA subfamily. The cofactor is Zn(2+).

It carries out the reaction L-ribulose 5-phosphate = D-xylulose 5-phosphate. Its pathway is cofactor degradation; L-ascorbate degradation; D-xylulose 5-phosphate from L-ascorbate: step 4/4. In terms of biological role, catalyzes the isomerization of L-ribulose 5-phosphate to D-xylulose 5-phosphate. Is involved in the anaerobic L-ascorbate utilization. This is Probable L-ribulose-5-phosphate 4-epimerase UlaF from Mycoplasma pneumoniae (strain ATCC 29342 / M129 / Subtype 1) (Mycoplasmoides pneumoniae).